A 492-amino-acid chain; its full sequence is MKQKCVLIITDGIGYNKNSKFNAFEAAKKPSYEKLFKEVPNSLLKTSGLAVGLPEGQMGNSEVGHMCIGSGRIIYQNLVRINKAIKNKELEKNENLQKLLAKCKRVHIIGLYSDGGVHSMDTHFKAMLEICAKNGNEVFAHAITDGRDVSPKSGLNFIKDLKGFCENLGVHFATLCGRFYSMDRDKRWDRVKEYYECLLGKAYKVPNLLEYLQKSYDENITDEFIKATQNENYKGMREEDGIIFINFRNDRMKQLVEVLNSKDFKEFEREKVFENLLTMSVYDDKFKLPVLFEKEKIENTLAQVISKAGLSQLHTAETEKYAHVTFFFNGGKEELLENETRVLISSPKVKTYDEKPQMSAFEVCDAVKKGIEKGEDFIVVNFANGDMVGHTGDFNAAIKAVEAVDTCLGEIVECAKKHDYAFIITSDHGNCEAMQDEKGNLLTNHTTFDVFVFVQASGVSKIKANMGLSNIAASVLKILDLEIPKEMNEALF.

Mn(2+)-binding residues include aspartate 11 and serine 61. Serine 61 functions as the Phosphoserine intermediate in the catalytic mechanism. Substrate is bound by residues histidine 118, 147–148 (RD), arginine 178, arginine 184, 248–251 (RNDR), and lysine 320. Aspartate 386, histidine 390, aspartate 427, histidine 428, and histidine 445 together coordinate Mn(2+).

It belongs to the BPG-independent phosphoglycerate mutase family. In terms of assembly, monomer. Mn(2+) serves as cofactor.

The enzyme catalyses (2R)-2-phosphoglycerate = (2R)-3-phosphoglycerate. Its pathway is carbohydrate degradation; glycolysis; pyruvate from D-glyceraldehyde 3-phosphate: step 3/5. Catalyzes the interconversion of 2-phosphoglycerate and 3-phosphoglycerate. The chain is 2,3-bisphosphoglycerate-independent phosphoglycerate mutase from Campylobacter jejuni subsp. doylei (strain ATCC BAA-1458 / RM4099 / 269.97).